Consider the following 842-residue polypeptide: Netrin receptor UNC5A (842 aa).

An N-terminal signal peptide occupies residues 1-25 (MAVRPGLWPALLGIVLAAWLRGSGA). The Extracellular segment spans residues 26–306 (QQSATVANPV…ASGPEDVALY (281 aa)). The Ig-like domain occupies 44-141 (PHFLVEPEDV…SGTTKSQKAY (98 aa)). 3 cysteine pairs are disulfide-bonded: Cys65/Cys126, Cys77/Cys124, and Cys170/Cys221. Residues Asn107 and Asn218 are each glycosylated (N-linked (GlcNAc...) asparagine). One can recognise an Ig-like C2-type domain in the interval 155–234 (PLAKEVSLEQ…NIVARRRSAS (80 aa)). Residues 242 to 294 (DGSWSPWSKWSACGLDCTHWRSRECSDPAPRNGGEECQGTDLDTRNCTSDLCV) enclose the TSP type-1 domain. 3 C-linked (Man) tryptophan glycosylation sites follow: Trp245, Trp248, and Trp251. Cystine bridges form between Cys254-Cys288, Cys258-Cys293, and Cys266-Cys278. N-linked (GlcNAc...) asparagine glycosylation occurs at Asn287. Residues 307–327 (VGLIAVAVCLVLLLLVLILVY) traverse the membrane as a helical segment. The Cytoplasmic portion of the chain corresponds to 328–842 (CRKKEGLDSD…GLFTVSEAEC (515 aa)). Positions 441–584 (NMTYGTFNFL…LGRFALVGEA (144 aa)) constitute a ZU5 domain. An interaction with DCC region spans residues 605 to 623 (SLEYNIRVYCLHDTHDALK). A Death domain is found at 761-841 (QKIISSLDPP…AGLFTVSEAE (81 aa)).

Belongs to the unc-5 family. As to quaternary structure, homodimer and homooligomer. Interacts with the cytoplasmic part of DCC. Interacts with MAGED1. Interacts with PRKCABP, possibly mediating some interaction with PKC. Interacts (via extracellular domain) with FLRT2 (via extracellular domain). Interacts (via extracellular domain) with FLRT3 (via extracellular domain). Phosphorylated on cytoplasmic tyrosine residues. Phosphorylated by PKC in vitro. Post-translationally, proteolytically cleaved by caspases during apoptosis. The cleavage does not take place when the receptor is associated with netrin ligand. Its cleavage by caspases is required to induce apoptosis. In terms of processing, the two extracellular TSRs of UNC5A contain WxxWxxWxxC motifs that can be C-mannosylated on all tryptophans. DPY19L1 preferentially mannosylates the first two tryptophans and DPY19L3 prefers the third. C-mannosylation by DPY19L1 is required for transport of UNC5A from the endoplasmic reticulum to the cell surface.

The protein localises to the cell membrane. It is found in the membrane raft. It localises to the cell projection. The protein resides in the neuron projection. Functionally, receptor for netrin required for axon guidance. Functions in the netrin signaling pathway and promotes neurite outgrowth in response to NTN1. Mediates axon repulsion of neuronal growth cones in the developing nervous system in response to netrin. Axon repulsion in growth cones may be mediated by its association with DCC that may trigger signaling for repulsion. It also acts as a dependence receptor required for apoptosis induction when not associated with netrin ligand. The polypeptide is Netrin receptor UNC5A (UNC5A) (Homo sapiens (Human)).